The sequence spans 232 residues: Ubiquinone biosynthesis O-methyltransferase (232 aa).

The S-adenosyl-L-methionine site is built by arginine 36, glycine 55, aspartate 76, and leucine 120.

It belongs to the methyltransferase superfamily. UbiG/COQ3 family.

It catalyses the reaction a 3-demethylubiquinol + S-adenosyl-L-methionine = a ubiquinol + S-adenosyl-L-homocysteine + H(+). It carries out the reaction a 3-(all-trans-polyprenyl)benzene-1,2-diol + S-adenosyl-L-methionine = a 2-methoxy-6-(all-trans-polyprenyl)phenol + S-adenosyl-L-homocysteine + H(+). Its pathway is cofactor biosynthesis; ubiquinone biosynthesis. O-methyltransferase that catalyzes the 2 O-methylation steps in the ubiquinone biosynthetic pathway. The polypeptide is Ubiquinone biosynthesis O-methyltransferase (Pseudomonas aeruginosa (strain UCBPP-PA14)).